We begin with the raw amino-acid sequence, 451 residues long: MKLKYFGTDGVRGVANQDLSPELAFRVGRAGGYVLTRHSERKQPQVLVARDTRISGEMLENALIAGLLSVGIEVLRLGVVTTPGVAYLVRAQEADAGVMITASHNPIKYNGIKYFGGNGFKLSDELEYEIEQLLDAEEDTLPRPSDAGLGTVADYHEGALKYTSFLEQTVSSDLEGLKVVVDAANGATSGFISNLFADMNVDFIPINDQPDGLNTNLNCGSTHPESLQKAVVENNADLGVAFDGDGDRCIAVDNEGNIVDGDKIMYICGKYMDKKGLLKKDTVVTTVMSNLGMYKALEAHNLKSVKTKVGDRYVVEEMLKNGYNLGGEQSGHIIFLDHNTTGDGMLTALQLLSVVKDSGKTLAELANDVTTYPQELLNIKVADKTTAMENQKLKEIIAQVEKEMNGDGRVLVRPSGTEPLLRIMAEAATPELVHEYVERIGDVARAELEVE.

Ser103 acts as the Phosphoserine intermediate in catalysis. Positions 103, 243, 245, and 247 each coordinate Mg(2+). Ser103 is modified (phosphoserine).

Belongs to the phosphohexose mutase family. Mg(2+) serves as cofactor. Post-translationally, activated by phosphorylation.

It catalyses the reaction alpha-D-glucosamine 1-phosphate = D-glucosamine 6-phosphate. Functionally, catalyzes the conversion of glucosamine-6-phosphate to glucosamine-1-phosphate. In Limosilactobacillus reuteri subsp. reuteri (strain JCM 1112) (Lactobacillus reuteri), this protein is Phosphoglucosamine mutase.